The chain runs to 265 residues: MSAHQARKRFGQHFLTDESVVESIVRAIGPARDDRVVEIGPGLSALTRPLLDRIDHLTAVEIDRDLAARLRRQYPAERLTVVEADALTVDFAQFGQGLRVVGNLPYNISSPLLFHLMGAAEQVRDQHFMLQREVIDRMVAEPGSGDYSRLSVMLQARYRMEKLFDVAPEAFDPPPRVVSAVVRMAPLPADRLRPASDAAFETVVARAFSQRRKMLRRVLDDWAALTPWDELGIAPTARAEEVGVAQFIGLADALLAAGAPGLARP.

S-adenosyl-L-methionine is bound by residues His-13, Leu-15, Gly-40, Glu-61, Asp-85, and Asn-103.

The protein belongs to the class I-like SAM-binding methyltransferase superfamily. rRNA adenine N(6)-methyltransferase family. RsmA subfamily.

The protein resides in the cytoplasm. The enzyme catalyses adenosine(1518)/adenosine(1519) in 16S rRNA + 4 S-adenosyl-L-methionine = N(6)-dimethyladenosine(1518)/N(6)-dimethyladenosine(1519) in 16S rRNA + 4 S-adenosyl-L-homocysteine + 4 H(+). Functionally, specifically dimethylates two adjacent adenosines (A1518 and A1519) in the loop of a conserved hairpin near the 3'-end of 16S rRNA in the 30S particle. May play a critical role in biogenesis of 30S subunits. The sequence is that of Ribosomal RNA small subunit methyltransferase A from Bordetella pertussis (strain Tohama I / ATCC BAA-589 / NCTC 13251).